The primary structure comprises 352 residues: Protein-glutamate methylesterase/protein-glutamine glutaminase (352 aa).

Residues Arg-5–Arg-123 form the Response regulatory domain. 4-aspartylphosphate is present on Asp-56. In terms of domain architecture, CheB-type methylesterase spans Glu-166–Gly-352. Active-site residues include Ser-173, His-200, and Asp-296.

The protein belongs to the CheB family. In terms of processing, phosphorylated by CheA. Phosphorylation of the N-terminal regulatory domain activates the methylesterase activity.

It localises to the cytoplasm. The catalysed reaction is [protein]-L-glutamate 5-O-methyl ester + H2O = L-glutamyl-[protein] + methanol + H(+). It carries out the reaction L-glutaminyl-[protein] + H2O = L-glutamyl-[protein] + NH4(+). In terms of biological role, involved in chemotaxis. Part of a chemotaxis signal transduction system that modulates chemotaxis in response to various stimuli. Catalyzes the demethylation of specific methylglutamate residues introduced into the chemoreceptors (methyl-accepting chemotaxis proteins or MCP) by CheR. Also mediates the irreversible deamidation of specific glutamine residues to glutamic acid. The sequence is that of Protein-glutamate methylesterase/protein-glutamine glutaminase from Trichodesmium erythraeum (strain IMS101).